The chain runs to 165 residues: Small ribosomal subunit protein bS16 (165 aa).

This sequence belongs to the bacterial ribosomal protein bS16 family.

This Azobacteroides pseudotrichonymphae genomovar. CFP2 protein is Small ribosomal subunit protein bS16.